A 159-amino-acid polypeptide reads, in one-letter code: Small ribosomal subunit protein uS7 (159 aa).

The protein belongs to the universal ribosomal protein uS7 family. In terms of assembly, part of the 30S ribosomal subunit. Contacts proteins S9 and S11.

One of the primary rRNA binding proteins, it binds directly to 16S rRNA where it nucleates assembly of the head domain of the 30S subunit. Is located at the subunit interface close to the decoding center, probably blocks exit of the E-site tRNA. In Endomicrobium trichonymphae, this protein is Small ribosomal subunit protein uS7.